A 490-amino-acid polypeptide reads, in one-letter code: NAD/NADP-dependent betaine aldehyde dehydrogenase (490 aa).

3 residues coordinate K(+): threonine 26, isoleucine 27, and aspartate 93. 150 to 153 (GAWN) contributes to the NADPH binding site. Residue lysine 162 is the Charge relay system of the active site. 176–179 (KPSE) lines the NADPH pocket. A K(+)-binding site is contributed by valine 180. Residues glycine 209 and 230–233 (GTST) contribute to the NADPH site. Leucine 246 serves as a coordination point for K(+). Catalysis depends on glutamate 252, which acts as the Proton acceptor. The NADPH site is built by cysteine 286 and glutamate 387. Residue cysteine 286 is the Nucleophile of the active site. Cysteine 286 carries the cysteine sulfenic acid (-SOH) modification. K(+)-binding residues include lysine 457 and glycine 460. Glutamate 464 functions as the Charge relay system in the catalytic mechanism.

This sequence belongs to the aldehyde dehydrogenase family. In terms of assembly, dimer of dimers. K(+) is required as a cofactor.

The enzyme catalyses betaine aldehyde + NAD(+) + H2O = glycine betaine + NADH + 2 H(+). It catalyses the reaction betaine aldehyde + NADP(+) + H2O = glycine betaine + NADPH + 2 H(+). It participates in amine and polyamine biosynthesis; betaine biosynthesis via choline pathway; betaine from betaine aldehyde: step 1/1. Functionally, involved in the biosynthesis of the osmoprotectant glycine betaine. Catalyzes the irreversible oxidation of betaine aldehyde to the corresponding acid. In P.aeruginosa this reaction is a compulsory step in the assimilation of carbon and nitrogen when bacteria are growing in choline or choline precursors. Can use NADP(+) with similar efficiency to NAD(+), a property that can be used by the bacterium to produce the NADPH needed to combat the oxidative stress imposed by the host defenses. In Pseudomonas aeruginosa (strain ATCC 15692 / DSM 22644 / CIP 104116 / JCM 14847 / LMG 12228 / 1C / PRS 101 / PAO1), this protein is NAD/NADP-dependent betaine aldehyde dehydrogenase.